Consider the following 274-residue polypeptide: Dermonecrotic toxin SdSicTox-betaIIB1bxii (274 aa).

Residue H5 is part of the active site. Mg(2+) contacts are provided by E25 and D27. The active-site Nucleophile is the H41. Cystine bridges form between C45/C51 and C47/C190. D85 is a binding site for Mg(2+).

Belongs to the arthropod phospholipase D family. Class II subfamily. Mg(2+) serves as cofactor. Expressed by the venom gland.

The protein localises to the secreted. It carries out the reaction an N-(acyl)-sphingosylphosphocholine = an N-(acyl)-sphingosyl-1,3-cyclic phosphate + choline. The catalysed reaction is an N-(acyl)-sphingosylphosphoethanolamine = an N-(acyl)-sphingosyl-1,3-cyclic phosphate + ethanolamine. It catalyses the reaction a 1-acyl-sn-glycero-3-phosphocholine = a 1-acyl-sn-glycero-2,3-cyclic phosphate + choline. The enzyme catalyses a 1-acyl-sn-glycero-3-phosphoethanolamine = a 1-acyl-sn-glycero-2,3-cyclic phosphate + ethanolamine. Its function is as follows. Dermonecrotic toxins cleave the phosphodiester linkage between the phosphate and headgroup of certain phospholipids (sphingolipid and lysolipid substrates), forming an alcohol (often choline) and a cyclic phosphate. This toxin acts on sphingomyelin (SM). It may also act on ceramide phosphoethanolamine (CPE), lysophosphatidylcholine (LPC) and lysophosphatidylethanolamine (LPE), but not on lysophosphatidylserine (LPS), and lysophosphatidylglycerol (LPG). It acts by transphosphatidylation, releasing exclusively cyclic phosphate products as second products. Induces dermonecrosis, hemolysis, increased vascular permeability, edema, inflammatory response, and platelet aggregation. The protein is Dermonecrotic toxin SdSicTox-betaIIB1bxii of Sicarius cf. damarensis (strain GJB-2008) (Six-eyed sand spider).